The primary structure comprises 90 residues: Acyl-CoA-binding protein homolog (90 aa).

The region spanning 3-89 is the ACB domain; sequence LQEQFDQAAS…VESLIASLGL (87 aa). Residues Arg15, 30-34, Lys53, Lys57, and Tyr76 contribute to the an acyl-CoA site; that span reads YALFK.

This sequence belongs to the ACBP family.

Its function is as follows. Binds medium- and long-chain acyl-CoA esters with very high affinity and may function as an intracellular carrier of acyl-CoA esters. The protein is Acyl-CoA-binding protein homolog of Manduca sexta (Tobacco hawkmoth).